Here is a 356-residue protein sequence, read N- to C-terminus: Tyrosine recombinase XerS (356 aa).

The region spanning 16–121 (LMPWFVLEYY…ALSCLYKYLT (106 aa)) is the Core-binding (CB) domain. The Tyr recombinase domain occupies 169 to 354 (KFLDYVENEY…VNDEQKNALD (186 aa)). Catalysis depends on residues Arg-210, Lys-234, His-306, Arg-309, and His-332. Tyr-341 (O-(3'-phospho-DNA)-tyrosine intermediate) is an active-site residue.

The protein belongs to the 'phage' integrase family. XerS subfamily.

The protein localises to the cytoplasm. With respect to regulation, ftsK is required for recombination. Site-specific tyrosine recombinase, which acts by catalyzing the cutting and rejoining of the recombining DNA molecules. Essential to convert dimers of the bacterial chromosome into monomers to permit their segregation at cell division. The sequence is that of Tyrosine recombinase XerS from Streptococcus thermophilus (strain ATCC BAA-250 / LMG 18311).